Here is an 861-residue protein sequence, read N- to C-terminus: ToMV susceptible protein tm-2 (861 aa).

The stretch at Val63–Asp83 forms a coiled coil. The region spanning Asp162–Asp388 is the NB-ARC domain. Gly185–Thr192 contacts ATP. 12 LRR repeats span residues Leu225 to Ser248, Leu305 to Phe327, Asp388 to Tyr411, Leu449 to Gly472, Val510 to Lys536, Met585 to Leu608, Thr609 to Ser631, Ile652 to Pro680, Leu689 to Lys713, Tyr735 to Pro758, Leu781 to Glu804, and Phe810 to Met835.

Belongs to the disease resistance NB-LRR family. In terms of assembly, (Microbial infection) Fails to interact with the tobamovirus mouvement protein of tobacco mosaic virus (TMV).

The protein localises to the cell membrane. Its function is as follows. Potential inhibitor of viral mouvements which may confer resistance to some tobamoviruses but not to the tomato mosaic virus (ToMV) and tobacco mosaic virus (TMV). The protein is ToMV susceptible protein tm-2 of Solanum lycopersicum (Tomato).